Here is a 190-residue protein sequence, read N- to C-terminus: Imidazoleglycerol-phosphate dehydratase (190 aa).

This sequence belongs to the imidazoleglycerol-phosphate dehydratase family.

It localises to the cytoplasm. The catalysed reaction is D-erythro-1-(imidazol-4-yl)glycerol 3-phosphate = 3-(imidazol-4-yl)-2-oxopropyl phosphate + H2O. It participates in amino-acid biosynthesis; L-histidine biosynthesis; L-histidine from 5-phospho-alpha-D-ribose 1-diphosphate: step 6/9. The sequence is that of Imidazoleglycerol-phosphate dehydratase from Methanococcus maripaludis (strain DSM 14266 / JCM 13030 / NBRC 101832 / S2 / LL).